A 149-amino-acid polypeptide reads, in one-letter code: Myoglobin (149 aa).

N-acetylalanine is present on Ala2. The Globin domain occupies 2–143; the sequence is ADWDKVNSVW…ICSDIEKEYK (142 aa). His89 lines the heme b pocket.

Belongs to the globin family. Monomeric.

The protein resides in the cytoplasm. Its subcellular location is the sarcoplasm. The enzyme catalyses Fe(III)-heme b-[protein] + nitric oxide + H2O = Fe(II)-heme b-[protein] + nitrite + 2 H(+). It catalyses the reaction H2O2 + AH2 = A + 2 H2O. Functionally, monomeric heme protein which primary function is to store oxygen and facilitate its diffusion within muscle tissues. Reversibly binds oxygen through a pentacoordinated heme iron and enables its timely and efficient release as needed during periods of heightened demand. Depending on the oxidative conditions of tissues and cells, and in addition to its ability to bind oxygen, it also has a nitrite reductase activity whereby it regulates the production of bioactive nitric oxide. Under stress conditions, like hypoxia and anoxia, it also protects cells against reactive oxygen species thanks to its pseudoperoxidase activity. This chain is Myoglobin (mb), found in Galeorhinus galeus (Tope shark).